Here is a 1070-residue protein sequence, read N- to C-terminus: Phosphatidylinositol 4,5-bisphosphate 3-kinase catalytic subunit beta isoform (1070 aa).

The PI3K-ABD domain occupies 26-115 (SDGSIPVDFL…LPVLKLVTRS (90 aa)). The region spanning 194–285 (GGKLIVAVHF…RALPHFILVE (92 aa)) is the PI3K-RBD domain. Residue S324 is modified to Phosphoserine. Residues 327–496 (WENNNPFQIV…NATALHVKFP (170 aa)) form the C2 PI3K-type domain. The Nuclear localization signal motif lies at 410-418 (KVKTKKSTK). One can recognise a PIK helical domain in the interval 524-701 (ANVSSRGGKK…GVILEAYCRG (178 aa)). A PI3K/PI4K catalytic domain is found at 772–1053 (YVEKCKYMDS…KFDEALRESW (282 aa)). The tract at residues 778-784 (YMDSKMK) is G-loop. Residues 916–924 (GIGDRHSDN) are catalytic loop. The activation loop stretch occupies residues 935–961 (HIDFGHILGNFKSKFGIKRERVPFILT). Residue S1070 is modified to Phosphoserine; by autocatalysis.

Belongs to the PI3/PI4-kinase family. In terms of assembly, heterodimer of a catalytic subunit PIK3CB and a p85 regulatory subunit (PIK3R1, PIK3R2 or PIK3R3). Interaction with PIK3R2 is required for nuclear localization and nuclear export. Part of a complex with PIK3R1 and PTEN. Binding to PTEN may antagonize the lipid kinase activity under normal growth conditions. Part of a complex involved in autophagosome formation composed of PIK3C3 and PIK3R4. Interacts with BECN1, ATG14 and RAB5A. In terms of processing, autophosphorylation at Ser-1070 negatively regulates the phosphatidylinositol-4,5-bisphosphate 3-kinase activity. In terms of tissue distribution, expressed ubiquitously.

The protein resides in the cytoplasm. The protein localises to the nucleus. The enzyme catalyses a 1,2-diacyl-sn-glycero-3-phospho-(1D-myo-inositol-4,5-bisphosphate) + ATP = a 1,2-diacyl-sn-glycero-3-phospho-(1D-myo-inositol-3,4,5-trisphosphate) + ADP + H(+). It carries out the reaction 1-octadecanoyl-2-(5Z,8Z,11Z,14Z)-eicosatetraenoyl-sn-glycero-3-phospho-1D-myo-inositol 4,5-bisphosphate + ATP = 1-octadecanoyl-2-(5Z,8Z,11Z,14Z-eicosatetraenoyl)-sn-glycero-3-phospho-(1D-myo-inositol 3,4,5-triphosphate) + ADP + H(+). It catalyses the reaction L-seryl-[protein] + ATP = O-phospho-L-seryl-[protein] + ADP + H(+). It functions in the pathway phospholipid metabolism; phosphatidylinositol phosphate biosynthesis. Phosphoinositide-3-kinase (PI3K) phosphorylates phosphatidylinositol derivatives at position 3 of the inositol ring to produce 3-phosphoinositides. Uses ATP and PtdIns(4,5)P2 (phosphatidylinositol 4,5-bisphosphate) to generate phosphatidylinositol 3,4,5-trisphosphate (PIP3). PIP3 plays a key role by recruiting PH domain-containing proteins to the membrane, including AKT1 and PDPK1, activating signaling cascades involved in cell growth, survival, proliferation, motility and morphology. Involved in the activation of AKT1 upon stimulation by G-protein coupled receptors (GPCRs) ligands such as CXCL12, sphingosine 1-phosphate, and lysophosphatidic acid. May also act downstream receptor tyrosine kinases. Required in different signaling pathways for stable platelet adhesion and aggregation. Plays a role in platelet activation signaling triggered by GPCRs, alpha-IIb/beta-3 integrins (ITGA2B/ ITGB3) and ITAM (immunoreceptor tyrosine-based activation motif)-bearing receptors such as GP6. Regulates the strength of adhesion of ITGA2B/ ITGB3 activated receptors necessary for the cellular transmission of contractile forces. Required for platelet aggregation induced by F2 (thrombin) and thromboxane A2 (TXA2). Has a role in cell survival. May have a role in cell migration. Involved in the early stage of autophagosome formation. Modulates the intracellular level of PtdIns3P (phosphatidylinositol 3-phosphate) and activates PIK3C3 kinase activity. May act as a scaffold, independently of its lipid kinase activity to positively regulate autophagy. May have a role in insulin signaling as scaffolding protein in which the lipid kinase activity is not required. May have a kinase-independent function in regulating cell proliferation and in clathrin-mediated endocytosis. Mediator of oncogenic signal in cell lines lacking PTEN. The lipid kinase activity is necessary for its role in oncogenic transformation. Required for the growth of ERBB2 and RAS driven tumors. Also has a protein kinase activity showing autophosphorylation. The protein is Phosphatidylinositol 4,5-bisphosphate 3-kinase catalytic subunit beta isoform (PIK3CB) of Homo sapiens (Human).